The primary structure comprises 190 residues: PBP1-interacting protein LSM12 (190 aa).

Positions proline 2–asparagine 69 constitute a Sm domain. The AD domain occupies proline 84 to lysine 190.

It belongs to the LSM12 family. As to quaternary structure, forms a complex composed of at least MKT1, PBP1, XAC1 and LSM12. Forms a complex composed of at least MKT1L, PBP1, XAC1 and LSM12. Within the complex, interacts with PBP1; the interaction is direct.

Involved in post-transcriptional regulation of gene expression. The polypeptide is PBP1-interacting protein LSM12 (Trypanosoma brucei brucei (strain 927/4 GUTat10.1)).